The chain runs to 619 residues: Putative zinc metalloprotease CT_072 (619 aa).

His20 serves as a coordination point for Zn(2+). Glu21 is an active-site residue. Zn(2+) is bound at residue His24. 3 helical membrane-spanning segments follow: residues 103–125, 558–580, and 593–610; these read IFVL…GILY, VLNL…WEIL, and ALVP…FLTL.

Belongs to the peptidase M50B family. Requires Zn(2+) as cofactor.

It is found in the cell inner membrane. This is Putative zinc metalloprotease CT_072 from Chlamydia trachomatis serovar D (strain ATCC VR-885 / DSM 19411 / UW-3/Cx).